We begin with the raw amino-acid sequence, 1158 residues long: MGLKIIYGRAGTGKSTFCINQIKKKINNSPTNKLILIVPEQFTFQTENKVLNAIGERYVLNAEVLSFKRLAHNVFNECGGATRTIMGDAGKSMLIFKVLEDLGDNMTVFKNASRQKGFIDIASKTITEFKKYNVNNEVLDLTINEIEDENLKMKMEELKDVFNEFNSRLHEGYVDEEDQLLLLNEKLDGCSLYDGAEIWIDEFSSFTPNQLSVIGKLLKRAKSVNITLSIDEVNSPKGESDLFVATKNTEKRLMNLIQEEGIAFNGYINLNEDISYRFKENKELAHIERQLYAYPFKQYRGKNNSLRLYRANNNYDEIEFVAKDILRLVREKQYRFKDISVICRDVDNYEKVVSAIFAEYEIPYYIDKKIDIASNPLIVFINSAVDIISKNWTYESMFKYLKTGLIKEFRGIEGAELIDELENYVLAYGIKGKKWMEEWVNYSSSILKEEEISEEDKQRLERLNDIRENIVTPLDEFNKQCKGKKTLKEFATILYEFLDSKLDVMDTIDKYVDYFKENDMAIEAKEYYEVRDIFIDVLEQAVDVLGNEVMDLNEFMKVLNIGLSQYEMGLIPVALDQVNIGDITRIKSRGTKALYIIGVNDGVLPSASKEEGILSDNDREILLEKGISLASDTRTKIFEEQFLVYTAFTIAEEYLVVTYPLADFEGKSQRPSIIVHRLKKILPNVKEESEGFKLVDDKYEKISAKLPTLNELMIAIRKNYDGAEIEDYWKYVYDWYLREPKWKERIEYVRKGLEYTNLENNISKEKAKKLYEDNKNKISLSVSRLERYAQCPFAYYIQYGLKAKDRKIYEFTAPDLGSFMHEILDEFTNEIKEKDLKWSDLSKENCRNIINSLVDNQVKNNKSSILNSSKRYSYFTDRFKRILTKSVMVISEQMKRSDFEIYKNELAFGFSKDVNSIKLDLPSGESFYLNGRIDRVDKLNLDGETYLRIIDYKTGSKKFDLNKFYNGLQMQLLVYLDALINNSENIVENQAMPGAILYFRIDDPILKSKGDLTEEEIKSEVLKELKLEGLLLDDVKVVKAMDNTLEPGTHSLIIPANMKKAGDLGKNKALITMEQFELLRKYVNEKMVEICQNMIEGKIDIEPCKENKNIVCDYCNYSHICQFDSSLEDNRYKVIPKKKDEDIWKSINEKVGGEVNGD.

8-15 (GRAGTGKS) contributes to the ATP binding site. 4 residues coordinate [4Fe-4S] cluster: Cys-791, Cys-1112, Cys-1115, and Cys-1121.

Belongs to the helicase family. AddB/RexB type 1 subfamily. In terms of assembly, heterodimer of AddA and AddB. Mg(2+) is required as a cofactor. The cofactor is [4Fe-4S] cluster.

The heterodimer acts as both an ATP-dependent DNA helicase and an ATP-dependent, dual-direction single-stranded exonuclease. Recognizes the chi site generating a DNA molecule suitable for the initiation of homologous recombination. The AddB subunit has 5' -&gt; 3' nuclease activity but not helicase activity. The protein is ATP-dependent helicase/deoxyribonuclease subunit B of Clostridium perfringens (strain ATCC 13124 / DSM 756 / JCM 1290 / NCIMB 6125 / NCTC 8237 / Type A).